A 347-amino-acid polypeptide reads, in one-letter code: Large ribosomal subunit protein uL3 (347 aa).

A disordered region spans residues 325–347; the sequence is RPPKKKPPVERPQITYISRESKQ.

The protein belongs to the universal ribosomal protein uL3 family. In terms of assembly, part of the 50S ribosomal subunit. Forms a cluster with proteins L14 and L24e.

Functionally, one of the primary rRNA binding proteins, it binds directly near the 3'-end of the 23S rRNA, where it nucleates assembly of the 50S subunit. This is Large ribosomal subunit protein uL3 from Thermococcus onnurineus (strain NA1).